Consider the following 385-residue polypeptide: Outer membrane protein assembly factor BamB (385 aa).

A signal peptide spans M1–G20. C21 is lipidated: N-palmitoyl cysteine. The S-diacylglycerol cysteine moiety is linked to residue C21.

The protein belongs to the BamB family. In terms of assembly, part of the Bam complex.

It is found in the cell outer membrane. Part of the outer membrane protein assembly complex, which is involved in assembly and insertion of beta-barrel proteins into the outer membrane. The sequence is that of Outer membrane protein assembly factor BamB from Aliivibrio fischeri (strain ATCC 700601 / ES114) (Vibrio fischeri).